Consider the following 480-residue polypeptide: Adenylosuccinate synthetase, chloroplastic (480 aa).

The N-terminal 54 residues, 1–54, are a transit peptide targeting the chloroplast; that stretch reads MATARVMVADRARAFGGTTATRARRDDQGRRVTIARGIPSRARVVVARASERAY. Residues 69–75 and 97–99 contribute to the GTP site; these read GDEGKGK and GHT. Asp-70 acts as the Proton acceptor in catalysis. 2 residues coordinate Mg(2+): Asp-70 and Gly-97. IMP is bound by residues 70-73, 95-98, Thr-187, Arg-201, Asn-278, Thr-293, and Arg-357; these read DEGK and NAGH. His-98 acts as the Proton donor in catalysis. Substrate is bound at residue 353 to 359; sequence TTTGRPR. GTP is bound by residues Arg-359, 385 to 387, and 468 to 470; these read KLD and GVG.

Belongs to the adenylosuccinate synthetase family. As to quaternary structure, homodimer. Mg(2+) is required as a cofactor.

It localises to the plastid. It is found in the chloroplast. The enzyme catalyses IMP + L-aspartate + GTP = N(6)-(1,2-dicarboxyethyl)-AMP + GDP + phosphate + 2 H(+). The protein operates within purine metabolism; AMP biosynthesis via de novo pathway; AMP from IMP: step 1/2. Functionally, plays an important role in the de novo pathway and in the salvage pathway of purine nucleotide biosynthesis. Catalyzes the first committed step in the biosynthesis of AMP from IMP. The polypeptide is Adenylosuccinate synthetase, chloroplastic (Ostreococcus tauri).